A 244-amino-acid chain; its full sequence is tRNA1(Val) (adenine(37)-N6)-methyltransferase (244 aa).

It belongs to the methyltransferase superfamily. tRNA (adenine-N(6)-)-methyltransferase family.

It localises to the cytoplasm. The catalysed reaction is adenosine(37) in tRNA1(Val) + S-adenosyl-L-methionine = N(6)-methyladenosine(37) in tRNA1(Val) + S-adenosyl-L-homocysteine + H(+). Functionally, specifically methylates the adenine in position 37 of tRNA(1)(Val) (anticodon cmo5UAC). The protein is tRNA1(Val) (adenine(37)-N6)-methyltransferase of Shewanella sediminis (strain HAW-EB3).